Reading from the N-terminus, the 459-residue chain is Alpha-N-acetylgalactosaminidase (459 aa).

The tat-type signal signal peptide spans 1–31; it reads MHNIHRRHFLKAAGAVTAGLVTANIALNANA. NAD(+) is bound by residues 64-65, D86, 135-138, 155-156, and N184; these read ER, WEWH, and EV. Residues Y213, R232, 244-247, and Y326 each bind substrate; that span reads YPTH. Y244 serves as a coordination point for NAD(+).

Belongs to the Gfo/Idh/MocA family. Glycosyl hydrolase 109 subfamily. NAD(+) serves as cofactor. Post-translationally, predicted to be exported by the Tat system. The position of the signal peptide cleavage has not been experimentally proven.

The catalysed reaction is Cleavage of non-reducing alpha-(1-&gt;3)-N-acetylgalactosamine residues from human blood group A and AB mucin glycoproteins, Forssman hapten and blood group A lacto series glycolipids.. Glycosidase that has specific alpha-N-acetylgalactosaminidase activity. The protein is Alpha-N-acetylgalactosaminidase (nagA) of Shewanella oneidensis (strain ATCC 700550 / JCM 31522 / CIP 106686 / LMG 19005 / NCIMB 14063 / MR-1).